A 450-amino-acid polypeptide reads, in one-letter code: Bestrophin homolog 1 (450 aa).

Topologically, residues Met-1–Ala-31 are cytoplasmic. A helical transmembrane segment spans residues Val-32–Lys-51. At Thr-52–Arg-60 the chain is on the extracellular side. Residues Thr-61–Leu-82 traverse the membrane as a helical segment. The Cytoplasmic segment spans residues Gly-83–Pro-242. A helical membrane pass occupies residues Gln-243 to Arg-260. The Extracellular segment spans residues Gln-261–Pro-278. A helical transmembrane segment spans residues Val-279–Leu-292. Topologically, residues Lys-293–Phe-450 are cytoplasmic. Residues Asn-300, Asp-305, and Asp-308 each coordinate Ca(2+).

This sequence belongs to the anion channel-forming bestrophin (TC 1.A.46) family. Calcium-sensitive chloride channel subfamily. In terms of assembly, forms oligomers.

Its subcellular location is the cell membrane. The catalysed reaction is chloride(in) = chloride(out). Its function is as follows. Ligand-gated anion channel that allows the movement of chloride monoatomic anions across cell membranes when activated by Calcium (Ca2+). This chain is Bestrophin homolog 1 (best-1), found in Caenorhabditis elegans.